A 275-amino-acid polypeptide reads, in one-letter code: Large ribosomal subunit protein uL2 (275 aa).

Disordered regions lie at residues 28–54 and 223–275; these read APHAPLLEKKSKSGGRNNNGRITTRHI and VAMN…RNKK.

Belongs to the universal ribosomal protein uL2 family. In terms of assembly, part of the 50S ribosomal subunit. Forms a bridge to the 30S subunit in the 70S ribosome.

One of the primary rRNA binding proteins. Required for association of the 30S and 50S subunits to form the 70S ribosome, for tRNA binding and peptide bond formation. It has been suggested to have peptidyltransferase activity; this is somewhat controversial. Makes several contacts with the 16S rRNA in the 70S ribosome. The protein is Large ribosomal subunit protein uL2 of Saccharophagus degradans (strain 2-40 / ATCC 43961 / DSM 17024).